Reading from the N-terminus, the 314-residue chain is Homoserine O-succinyltransferase (314 aa).

The Acyl-thioester intermediate role is filled by Cys142. Residues Lys163 and Ser192 each contribute to the substrate site. Catalysis depends on His235, which acts as the Proton acceptor. The active site involves Glu237. Arg249 lines the substrate pocket.

This sequence belongs to the MetA family.

It localises to the cytoplasm. It carries out the reaction L-homoserine + succinyl-CoA = O-succinyl-L-homoserine + CoA. The protein operates within amino-acid biosynthesis; L-methionine biosynthesis via de novo pathway; O-succinyl-L-homoserine from L-homoserine: step 1/1. Its function is as follows. Transfers a succinyl group from succinyl-CoA to L-homoserine, forming succinyl-L-homoserine. The sequence is that of Homoserine O-succinyltransferase from Photobacterium profundum (strain SS9).